Here is a 479-residue protein sequence, read N- to C-terminus: Dihydrolipoyl dehydrogenase, mitochondrial (479 aa).

A mitochondrion-targeting transit peptide spans 1-19 (FNRXSPGLQGVSSVPLRTY). Position 50 is an N6-acetyllysine; alternate (K50). The residue at position 50 (K50) is an N6-succinyllysine; alternate. FAD contacts are provided by residues 55-64 (EKNETLGGTC) and K73. C64 and C69 are joined by a disulfide. N6-acetyllysine; alternate occurs at positions 88, 106, 116, and 127. N6-succinyllysine; alternate occurs at positions 88, 106, 116, and 127. G138 is a binding site for FAD. 2 positions are modified to N6-succinyllysine: K143 and K150. FAD is bound at residue 167-169 (TGS). NAD(+)-binding positions include 204 to 211 (GAGVIGVE) and E227. N6-succinyllysine is present on residues K257 and K261. Position 262 (V262) interacts with NAD(+). Residue S269 is modified to Phosphoserine. G298 lines the NAD(+) pocket. K330 is subject to N6-acetyllysine. FAD contacts are provided by residues D339 and 345 to 348 (MLAH). At K394 the chain carries N6-acetyllysine; alternate. K394 is modified (N6-succinyllysine; alternate). Residues K401 and K404 each carry the N6-acetyllysine modification. Position 414 is an N6-succinyllysine (K414). Residue H471 is the Proton acceptor of the active site.

This sequence belongs to the class-I pyridine nucleotide-disulfide oxidoreductase family. In terms of assembly, homodimer. Part of the multimeric pyruvate dehydrogenase complex that contains multiple copies of pyruvate dehydrogenase (subunits PDHA (PDHA1 or PDHA2) and PDHB, E1), dihydrolipoamide acetyltransferase (DLAT, E2) and lipoamide dehydrogenase (DLD, E3). These subunits are bound to an inner core composed of about 48 DLAT and 12 PDHX molecules (by non covalent bonds). The 2-oxoglutarate dehydrogenase complex is composed of OGDH (2-oxoglutarate dehydrogenase; E1), DLST (dihydrolipoamide succinyltransferase; E2) and DLD (dihydrolipoamide dehydrogenase; E3). It contains multiple copies of the three enzymatic components (E1, E2 and E3). In the nucleus, the 2-oxoglutarate dehydrogenase complex associates with KAT2A. Interacts with PDHX. It depends on FAD as a cofactor. Post-translationally, tyrosine phosphorylated. In terms of tissue distribution, expressed in testis (at protein level).

It localises to the mitochondrion matrix. Its subcellular location is the nucleus. The protein resides in the cell projection. The protein localises to the cilium. It is found in the flagellum. It localises to the cytoplasmic vesicle. Its subcellular location is the secretory vesicle. The protein resides in the acrosome. The enzyme catalyses N(6)-[(R)-dihydrolipoyl]-L-lysyl-[protein] + NAD(+) = N(6)-[(R)-lipoyl]-L-lysyl-[protein] + NADH + H(+). In terms of biological role, lipoamide dehydrogenase is a component of the glycine cleavage system as well as an E3 component of three alpha-ketoacid dehydrogenase complexes (pyruvate-, alpha-ketoglutarate-, and branched-chain amino acid-dehydrogenase complex). The 2-oxoglutarate dehydrogenase complex is mainly active in the mitochondrion. A fraction of the 2-oxoglutarate dehydrogenase complex also localizes in the nucleus and is required for lysine succinylation of histones: associates with KAT2A on chromatin and provides succinyl-CoA to histone succinyltransferase KAT2A. In monomeric form may have additional moonlighting function as serine protease. Involved in the hyperactivation of spermatazoa during capacitation and in the spermatazoal acrosome reaction. The protein is Dihydrolipoyl dehydrogenase, mitochondrial (DLD) of Mesocricetus auratus (Golden hamster).